A 143-amino-acid polypeptide reads, in one-letter code: Large ribosomal subunit protein uL11 (143 aa).

This sequence belongs to the universal ribosomal protein uL11 family. As to quaternary structure, part of the ribosomal stalk of the 50S ribosomal subunit. Interacts with L10 and the large rRNA to form the base of the stalk. L10 forms an elongated spine to which L12 dimers bind in a sequential fashion forming a multimeric L10(L12)X complex. In terms of processing, one or more lysine residues are methylated.

Forms part of the ribosomal stalk which helps the ribosome interact with GTP-bound translation factors. This chain is Large ribosomal subunit protein uL11, found in Methylococcus capsulatus (strain ATCC 33009 / NCIMB 11132 / Bath).